Here is an 896-residue protein sequence, read N- to C-terminus: Serine/threonine-protein kinase TAO3 (896 aa).

The 254-residue stretch at 24–277 (FVDLHEIGHG…SLELLRHDFV (254 aa)) folds into the Protein kinase domain. ATP contacts are provided by residues 30 to 38 (IGHGSFGAV) and Lys53. Asp147 serves as the catalytic Proton acceptor. Disordered stretches follow at residues 316–366 (SRNG…SVNS) and 403–423 (DEAD…VQSQ). Residues 334–348 (GTSLTRKMDSLGSNH) are compositionally biased toward polar residues. Residues 349–366 (SIPSTSVSTGSQSSSVNS) show a composition bias toward low complexity. A compositionally biased stretch (basic and acidic residues) spans 403 to 414 (DEADHRDPRPEL). 3 coiled-coil regions span residues 450–513 (EQEN…SKRQ), 545–650 (SFLE…LIRQ), and 752–873 (LKSL…IETF). Residues 565-587 (LNEDHSTPKKEKQERISKHKENL) are compositionally biased toward basic and acidic residues. The tract at residues 565-593 (LNEDHSTPKKEKQERISKHKENLQHTQAE) is disordered.

The protein belongs to the protein kinase superfamily. STE Ser/Thr protein kinase family. STE20 subfamily.

The protein resides in the cytoplasm. The protein localises to the cell membrane. It is found in the membrane raft. Its subcellular location is the lipid droplet. It catalyses the reaction L-seryl-[protein] + ATP = O-phospho-L-seryl-[protein] + ADP + H(+). It carries out the reaction L-threonyl-[protein] + ATP = O-phospho-L-threonyl-[protein] + ADP + H(+). Serine/threonine-protein kinase that acts as a regulator of the p38/MAPK14 stress-activated MAPK cascade and of the MAPK8/JNK cascade. In response to DNA damage, involved in the G2/M transition DNA damage checkpoint by activating the p38/MAPK14 stress-activated MAPK cascade, probably by mediating phosphorylation of upstream MAP kinase kinases. Inhibits basal activity of the MAPK8/JNK cascade. The sequence is that of Serine/threonine-protein kinase TAO3 (taok3) from Xenopus laevis (African clawed frog).